Reading from the N-terminus, the 201-residue chain is Cytochrome c oxidase assembly protein CtaG (201 aa).

Over 1-13 (MTDQGENEKKQRR) the chain is Cytoplasmic. A helical; Signal-anchor for type II membrane protein membrane pass occupies residues 14–36 (SNATIAVACLSFFVCMIGAAYAS). The Periplasmic segment spans residues 37–201 (VPLYRIFCQV…KAVGSTRNGG (165 aa)).

Belongs to the COX11/CtaG family.

It localises to the cell inner membrane. Exerts its effect at some terminal stage of cytochrome c oxidase synthesis, probably by being involved in the insertion of the copper B into subunit I. The polypeptide is Cytochrome c oxidase assembly protein CtaG (Brucella suis (strain ATCC 23445 / NCTC 10510)).